Consider the following 491-residue polypeptide: Sucrose transport protein SUC7 (491 aa).

Residues 1 to 13 show a composition bias toward basic and acidic residues; that stretch reads MSDLQANKDETTV. Residues 1-25 are disordered; the sequence is MSDLQANKDETTVDRQSSSSVDLDG. At 1-32 the chain is on the cytoplasmic side; sequence MSDLQANKDETTVDRQSSSSVDLDGPSPLRKM. Position 17 is a phosphoserine (Ser-17). The helical transmembrane segment at 33-53 threads the bilayer; that stretch reads ISVASIAAGIQFGWALQLSLL. Residues 54 to 67 are Extracellular-facing; sequence TPYVQLLGVPHKWP. Residues 68–88 traverse the membrane as a helical segment; that stretch reads SFIWLCGPVSGLLVQPSVGYF. Topologically, residues 89-100 are cytoplasmic; that stretch reads SDRCTSRFGRRR. Residues 101-121 traverse the membrane as a helical segment; that stretch reads PFIATGALLVAVSVVLIGYAA. Topologically, residues 122–138 are extracellular; the sequence is DFGHSMGDKIDKPVKMR. A helical membrane pass occupies residues 139–159; it reads AVVIFALGFWILDVANNTLQG. Residues 160–180 are Cytoplasmic-facing; the sequence is PCRAFLGDLAAGDAQKTRTAN. Residues 181 to 201 traverse the membrane as a helical segment; it reads AFFSFFMAVGNVLGYAAGSYT. Topologically, residues 202–223 are extracellular; sequence NLYKIFPFTMTKACDIYCANLK. Residues 224–244 traverse the membrane as a helical segment; it reads SCFFLSITLLLVVTIIALWYV. The Cytoplasmic portion of the chain corresponds to 245–276; that stretch reads EDKQWSPKADSDNEKTPFFGEIFGAFKVMKRP. A helical transmembrane segment spans residues 277 to 297; the sequence is MWMLLIVTALNWIAWFPFLLY. The Extracellular portion of the chain corresponds to 298–323; sequence DTDWMGREVYGGDSKGDDKMKKLYNQ. A helical transmembrane segment spans residues 324–344; the sequence is GIHVGALGLMLNSIVLGVMSL. Topologically, residues 345–358 are cytoplasmic; it reads GIEGISRKMGGAKR. Residues 359–379 traverse the membrane as a helical segment; that stretch reads LWGAVNIILAVCLAMTVLVTK. Residues 380 to 402 are Extracellular-facing; the sequence is KAEEHRRIAGPMALPTDGIRAGA. The chain crosses the membrane as a helical span at residues 403–423; the sequence is LTLFALLGIPLAITFSIPFAL. Topologically, residues 424-443 are cytoplasmic; the sequence is ASIISSSSGAGQRLSLGVLN. A helical transmembrane segment spans residues 444 to 464; the sequence is MAIVIPQMIVSFGVGPIDALF. The Extracellular portion of the chain corresponds to 465-468; sequence GDGN. Residues 469–489 form a helical membrane-spanning segment; the sequence is LPGFVVGAIAAAVSSIVAFTV. The Cytoplasmic portion of the chain corresponds to 490-491; the sequence is LP.

This sequence belongs to the glycoside-pentoside-hexuronide (GPH) cation symporter transporter (TC 2.A.2.4) family. In terms of tissue distribution, expressed in anthers.

Its subcellular location is the cell membrane. It participates in glycan biosynthesis; sucrose metabolism. Its function is as follows. May be responsible for the transport of glucosides into the cell, with the concomitant uptake of protons (symport system). Does not seem to transport sucrose. The chain is Sucrose transport protein SUC7 from Arabidopsis thaliana (Mouse-ear cress).